Reading from the N-terminus, the 538-residue chain is Protein PNS1 (538 aa).

A compositionally biased stretch (low complexity) spans 1–54; that stretch reads MGESDAYYNGGQQQQYNGGYQQQYQPQPPAASYQAPPQQPYQQQPYQQGPPQNG. The disordered stretch occupies residues 1–67; the sequence is MGESDAYYNG…GNGYMPAQGY (67 aa). The Cytoplasmic portion of the chain corresponds to 1 to 88; that stretch reads MGESDAYYNG…FKIAKPKYND (88 aa). Residues 89-109 form a helical membrane-spanning segment; it reads LWAGILLILVFAGFVVVSGLA. The Extracellular portion of the chain corresponds to 110–137; the sequence is LQGYSANKGNAGDGIYNNKNDFSPNTST. Asparagine 134 is a glycosylation site (N-linked (GlcNAc...) asparagine). A helical transmembrane segment spans residues 138 to 158; it reads VILFMFVLAVAFVLSYAYVWM. At 159 to 165 the chain is on the cytoplasmic side; it reads ARLFPKQ. Residues 166–186 form a helical membrane-spanning segment; the sequence is FIWVTGILNVCWAIGTAIFYL. At 187–191 the chain is on the extracellular side; the sequence is WRKYW. A helical transmembrane segment spans residues 192-212; that stretch reads SAGIVFLIFGLFMAFCFWTWI. Residues 213 to 239 are Cytoplasmic-facing; that stretch reads SRIPFSALMLKTTIDVSKKYGHVYLVS. A helical membrane pass occupies residues 240–260; the sequence is LIGGIIATAFSAWYAITLVGI. At 261–280 the chain is on the extracellular side; the sequence is YVKYQPAQDNPSCADGGCGK. Residues 281–301 traverse the membrane as a helical segment; sequence GKVIGLIAFITFAMYWFSEWL. Residues 302 to 335 are Cytoplasmic-facing; sequence KNTIHTTIAGVYGSWYFNPHNFPKDATRASAKRA. Residues 336–356 traverse the membrane as a helical segment; sequence LTYSFGSIALGSLLVAIIQFL. The Extracellular segment spans residues 357 to 372; that stretch reads RQICNAARNQEGADGS. A helical transmembrane segment spans residues 373 to 393; sequence FVGYAIFCCISCLLGLLEWAV. Over 394–434 the chain is Cytoplasmic; that stretch reads EFINRYAFCHIALYGKAYFAAAKDTWKMIKDRGIDALINDC. The chain crosses the membrane as a helical span at residues 435 to 455; that stretch reads LIGPVLSFGALFIAYACALLA. Residues 456–474 lie on the Extracellular side of the membrane; sequence YLYLYFTDPAYNSDGQYTA. The chain crosses the membrane as a helical span at residues 475 to 495; it reads VVMAFSFLIGFQIANVFTTPI. Residues 496–538 are Cytoplasmic-facing; that stretch reads SSGIETIFVAAGWDPQVMWRDHPELYNEMVRVYPKVQQVIKDR.

Belongs to the CTL (choline transporter-like) family.

The protein resides in the cell membrane. Probably involved in transport through the plasma membrane. The polypeptide is Protein PNS1 (PNS1) (Gibberella zeae (strain ATCC MYA-4620 / CBS 123657 / FGSC 9075 / NRRL 31084 / PH-1) (Wheat head blight fungus)).